A 465-amino-acid chain; its full sequence is MAP kinase-interacting serine/threonine-protein kinase 1 (465 aa).

Basic and acidic residues predominate over residues 1 to 11; the sequence is MVSSQKLEKPI. Positions 1–40 are disordered; it reads MVSSQKLEKPIEMGSSEPLPIADGDRRRKKKRRGRATDSL. Ser-39 carries the post-translational modification Phosphoserine. Residues 49–374 enclose the Protein kinase domain; the sequence is KLTSELLGEG…AAQVLQHPWV (326 aa). Residues 55-63 and Lys-78 contribute to the ATP site; that span reads LGEGAYAKV. A compositionally biased stretch (polar residues) spans 185-203; the sequence is APTSLGSSDPPTSASQVAG. A disordered region spans residues 185-204; that stretch reads APTSLGSSDPPTSASQVAGT. Catalysis depends on Asp-211, which acts as the Proton acceptor. 2 positions are modified to phosphoserine: Ser-221 and Ser-226. Phosphothreonine occurs at positions 250, 255, and 385. The interval 446–465 is disordered; it reads RRRALAQAGRGEDRSPPTAL. Residues 455–465 are compositionally biased toward basic and acidic residues; that stretch reads RGEDRSPPTAL. Ser-460 is subject to Phosphoserine.

This sequence belongs to the protein kinase superfamily. CAMK Ser/Thr protein kinase family. Interacts with the C-terminal regions of EIF4G1 and EIF4G2. Also binds to dephosphorylated ERK1 and ERK2, and to the p38 kinases. Mg(2+) serves as cofactor. In terms of processing, dual phosphorylation of Thr-250 and Thr-255 activates the kinase. Phosphorylation of Thr-385 activates the kinase. MAPK3/ERK1 is one of the kinases which activate MKNK1/MNK1. Phosphorylation by PAK2 leads to a reduced phosphorylation of EIF4G1. Ubiquitous.

The protein resides in the cytoplasm. Its subcellular location is the nucleus. The enzyme catalyses L-seryl-[protein] + ATP = O-phospho-L-seryl-[protein] + ADP + H(+). The catalysed reaction is L-threonyl-[protein] + ATP = O-phospho-L-threonyl-[protein] + ADP + H(+). Its activity is regulated as follows. Phosphorylated and activated by the p38 kinases and kinases in the Erk pathway. In terms of biological role, may play a role in the response to environmental stress and cytokines. Appears to regulate translation by phosphorylating EIF4E, thus increasing the affinity of this protein for the 7-methylguanosine-containing mRNA cap. This chain is MAP kinase-interacting serine/threonine-protein kinase 1 (MKNK1), found in Homo sapiens (Human).